Consider the following 447-residue polypeptide: Tubulin beta chain (447 aa).

8 residues coordinate GTP: Gln11, Glu69, Ser138, Gly142, Thr143, Gly144, Asn204, and Asn226. Glu69 contacts Mg(2+). A disordered region spans residues 424–447 (QYQEASVSEGEEEYDEEAPLEGEE). Acidic residues predominate over residues 432–447 (EGEEEYDEEAPLEGEE).

The protein belongs to the tubulin family. As to quaternary structure, dimer of alpha and beta chains. A typical microtubule is a hollow water-filled tube with an outer diameter of 25 nm and an inner diameter of 15 nM. Alpha-beta heterodimers associate head-to-tail to form protofilaments running lengthwise along the microtubule wall with the beta-tubulin subunit facing the microtubule plus end conferring a structural polarity. Microtubules usually have 13 protofilaments but different protofilament numbers can be found in some organisms and specialized cells. Requires Mg(2+) as cofactor.

Its subcellular location is the cytoplasm. The protein localises to the cytoskeleton. Tubulin is the major constituent of microtubules, a cylinder consisting of laterally associated linear protofilaments composed of alpha- and beta-tubulin heterodimers. Microtubules grow by the addition of GTP-tubulin dimers to the microtubule end, where a stabilizing cap forms. Below the cap, tubulin dimers are in GDP-bound state, owing to GTPase activity of alpha-tubulin. In Dothistroma septosporum (Red band needle blight fungus), this protein is Tubulin beta chain (TUB1).